Consider the following 377-residue polypeptide: [2-(trimethylamino)ethyl]phosphonate dioxygenase (377 aa).

The disordered stretch occupies residues 95 to 119; it reads DTDQSSEVGRTSPDVETWDSSQPAP. Asparagine 187 contacts [2-(trimethylamino)ethyl]phosphonate. Histidine 198 provides a ligand contact to 2-oxoglutarate. 2 residues coordinate Fe(2+): histidine 198 and aspartate 200. [2-(trimethylamino)ethyl]phosphonate is bound by residues aspartate 200, asparagine 201, tyrosine 203, asparagine 286, and arginine 288. 2-oxoglutarate-binding residues include histidine 341, arginine 343, and arginine 352. Residue histidine 341 participates in Fe(2+) binding.

Belongs to the gamma-BBH/TMLD family. Homodimer. Requires Fe(2+) as cofactor. L-ascorbate serves as cofactor.

The enzyme catalyses [2-(trimethylamino)ethyl]phosphonate + 2-oxoglutarate + O2 = [(1R)-1-hydroxy-2-(trimethylamino)ethyl]phosphonate + succinate + CO2. Functionally, involved in the degradation of the naturally occurring organophosphonate 2-(trimethylammonio)ethylphosphonate (TMAEP). Catalyzes the hydroxylation of TMAEP to (R)-1-hydroxy-2-(trimethylammonio)ethylphosphonate (OH-TMAEP). Is highly specific for its N-trimethylated substrate. Cannot use gamma-butyrobetaine as substrate. This Leisingera caerulea (Phaeobacter caeruleus) protein is [2-(trimethylamino)ethyl]phosphonate dioxygenase.